Consider the following 507-residue polypeptide: MKIDLNKVAREIEVDNRIPLRNYYRIADNLLRQASIYREEKNVVDLYIMLLRYSSLISETIPFHRDYQASLPQERLGSRKRLRAVINELESLKPEFNQLVDKLNRVEDESRQDGSDLPVVSYSSDAVEWPPAHKASYSRPDINKPLPTSQPSWTYNNNLTSSSNRTQIDQQFQKLSFDFLPPNQATLSRHSFLGPNGLKRQMVAPKSEIKVQYPSNTDWGSADNSGLIEAGPSSSSASLNGDSQEVSTLNSVLSLDDGRWQRHSEAVNSQFISDATEDPFQFVGMKQPSPPPVLAQVHQELAQICPSKVADPRPGPAIPSLEGKEGSNSYQHLHVPVRIMDDFLRLARSNTERNLETCGVLAGSLKNRVFHITTLIIPKQESTSDSCQTLNEEEIFEVQDRLSLFPLGWIHTHPTQTCFMSSVDLHTHYSYQIMLPEAVAIVMAPTDESTPHGIFHLSDPSGVSVIRNCQQRGFHPHEESEDGNPIYEHCSHVFLNAKLKYEVLDLR.

Residues 73–107 are a coiled coil; the sequence is QERLGSRKRLRAVINELESLKPEFNQLVDKLNRVE. Disordered stretches follow at residues 133–162 and 214–242; these read HKAS…LTSS and PSNT…LNGD. Composition is skewed to polar residues over residues 146–162, 214–224, and 232–242; these read LPTS…LTSS, PSNTDWGSADN, and PSSSSASLNGD. Residues 333–463 form the MPN domain; it reads LHVPVRIMDD…IFHLSDPSGV (131 aa). Zn(2+) is bound by residues His-411, His-413, Asp-424, His-426, Cys-469, His-475, and His-477. Positions 411 to 424 match the JAMM motif motif; the sequence is HTHPTQTCFMSSVD.

This sequence belongs to the peptidase M67C family. Interacts with PATL1 and PATL2. May also bind to HSC70-1, HSC70-3, VHA-A, BGLU23 and EPSIN1. Interacts with BRO1/ALIX. The cofactor is Zn(2+).

The protein localises to the membrane. The protein resides in the cytoplasm. It localises to the vacuole membrane. It is found in the late endosome. Zinc metalloprotease that cleaves 'Lys-48'- and 'Lys-63'-linked polyubiquitin chains, but is not implicated in protein degradation by the 26S proteasome, deneddylation, or desumoylation. Required for intracellular trafficking (e.g. trafficking from the Golgi to the vacuole and the vacuolar trafficking of endocytosed cargo), endocytosis and vacuole biogenesis. The sequence is that of AMSH-like ubiquitin thioesterase 3 (AMSH3) from Arabidopsis thaliana (Mouse-ear cress).